The following is a 568-amino-acid chain: Proline--tRNA ligase (568 aa).

The protein belongs to the class-II aminoacyl-tRNA synthetase family. ProS type 1 subfamily. Homodimer.

The protein resides in the cytoplasm. The catalysed reaction is tRNA(Pro) + L-proline + ATP = L-prolyl-tRNA(Pro) + AMP + diphosphate. Catalyzes the attachment of proline to tRNA(Pro) in a two-step reaction: proline is first activated by ATP to form Pro-AMP and then transferred to the acceptor end of tRNA(Pro). As ProRS can inadvertently accommodate and process non-cognate amino acids such as alanine and cysteine, to avoid such errors it has two additional distinct editing activities against alanine. One activity is designated as 'pretransfer' editing and involves the tRNA(Pro)-independent hydrolysis of activated Ala-AMP. The other activity is designated 'posttransfer' editing and involves deacylation of mischarged Ala-tRNA(Pro). The misacylated Cys-tRNA(Pro) is not edited by ProRS. This Nitrosomonas eutropha (strain DSM 101675 / C91 / Nm57) protein is Proline--tRNA ligase.